The following is an 802-amino-acid chain: Penicillin G acylase (802 aa).

A signal peptide spans 1-24; the sequence is MKTKWLISVIILFVFIFPQNLVFA. Glu-177 contacts Ca(2+). A propeptide spans 235–265 (spacer peptide); it reads SAVIKASEKVGKERENFVQTSEELGLPLKIG. Catalysis depends on Ser-266, which acts as the Nucleophile. Asp-341 serves as a coordination point for Ca(2+).

This sequence belongs to the peptidase S45 family. In terms of assembly, heterodimer of an alpha subunit and a beta subunit processed from the same precursor. It depends on Ca(2+) as a cofactor.

It is found in the secreted. It catalyses the reaction a penicillin + H2O = 6-aminopenicillanate + a carboxylate. This chain is Penicillin G acylase (pac), found in Priestia megaterium (Bacillus megaterium).